The chain runs to 206 residues: Cytochrome c biogenesis ATP-binding export protein CcmA (206 aa).

The ABC transporter domain maps to Val-3–Leu-206. Gly-35 to Thr-42 contributes to the ATP binding site.

Belongs to the ABC transporter superfamily. CcmA exporter (TC 3.A.1.107) family. As to quaternary structure, the complex is composed of two ATP-binding proteins (CcmA) and two transmembrane proteins (CcmB).

The protein resides in the cell inner membrane. It catalyses the reaction heme b(in) + ATP + H2O = heme b(out) + ADP + phosphate + H(+). Its function is as follows. Part of the ABC transporter complex CcmAB involved in the biogenesis of c-type cytochromes; once thought to export heme, this seems not to be the case, but its exact role is uncertain. Responsible for energy coupling to the transport system. The protein is Cytochrome c biogenesis ATP-binding export protein CcmA of Roseobacter denitrificans (strain ATCC 33942 / OCh 114) (Erythrobacter sp. (strain OCh 114)).